The chain runs to 152 residues: Transcriptional regulator MraZ (152 aa).

2 consecutive SpoVT-AbrB domains span residues 5 to 52 (VTSI…PLHE) and 81 to 124 (ATEC…QDKQ).

The protein belongs to the MraZ family. Forms oligomers.

It is found in the cytoplasm. It localises to the nucleoid. This is Transcriptional regulator MraZ from Actinobacillus pleuropneumoniae serotype 3 (strain JL03).